We begin with the raw amino-acid sequence, 312 residues long: Malate dehydrogenase (312 aa).

Residues 7-13 (GAAGGIG) and Asp-34 each bind NAD(+). Arg-81 and Arg-87 together coordinate substrate. Residues Asn-94 and 117–119 (ITN) contribute to the NAD(+) site. The substrate site is built by Asn-119 and Arg-153. His-177 functions as the Proton acceptor in the catalytic mechanism. Met-227 is an NAD(+) binding site.

The protein belongs to the LDH/MDH superfamily. MDH type 1 family. In terms of assembly, homodimer.

The enzyme catalyses (S)-malate + NAD(+) = oxaloacetate + NADH + H(+). In terms of biological role, catalyzes the reversible oxidation of malate to oxaloacetate. This chain is Malate dehydrogenase, found in Escherichia coli (strain SE11).